The chain runs to 291 residues: Ribonuclease Z (291 aa).

Zn(2+)-binding residues include His-61, His-63, Asp-65, His-66, His-133, Asp-201, and His-257. The active-site Proton acceptor is Asp-65.

This sequence belongs to the RNase Z family. Homodimer. It depends on Zn(2+) as a cofactor.

It catalyses the reaction Endonucleolytic cleavage of RNA, removing extra 3' nucleotides from tRNA precursor, generating 3' termini of tRNAs. A 3'-hydroxy group is left at the tRNA terminus and a 5'-phosphoryl group is left at the trailer molecule.. In terms of biological role, zinc phosphodiesterase, which displays some tRNA 3'-processing endonuclease activity. Probably involved in tRNA maturation, by removing a 3'-trailer from precursor tRNA. In Saccharolobus islandicus (strain M.16.27) (Sulfolobus islandicus), this protein is Ribonuclease Z.